Reading from the N-terminus, the 122-residue chain is Small ribosomal subunit protein uS13 (122 aa).

Residues 94 to 122 are disordered; sequence KGLPVRGQRTHTNARTRKGPRRAIAGKKK.

The protein belongs to the universal ribosomal protein uS13 family. As to quaternary structure, part of the 30S ribosomal subunit. Forms a loose heterodimer with protein S19. Forms two bridges to the 50S subunit in the 70S ribosome.

Functionally, located at the top of the head of the 30S subunit, it contacts several helices of the 16S rRNA. In the 70S ribosome it contacts the 23S rRNA (bridge B1a) and protein L5 of the 50S subunit (bridge B1b), connecting the 2 subunits; these bridges are implicated in subunit movement. Contacts the tRNAs in the A and P-sites. This chain is Small ribosomal subunit protein uS13, found in Syntrophus aciditrophicus (strain SB).